The following is a 361-amino-acid chain: 3-dehydroquinate synthase (361 aa).

Residues 107 to 111 (GVIGD), 131 to 132 (TS), Lys-144, and Lys-153 contribute to the NAD(+) site. Zn(2+) is bound by residues Glu-186, His-251, and His-268.

It belongs to the sugar phosphate cyclases superfamily. Dehydroquinate synthase family. NAD(+) is required as a cofactor. Requires Co(2+) as cofactor. The cofactor is Zn(2+).

It is found in the cytoplasm. The enzyme catalyses 7-phospho-2-dehydro-3-deoxy-D-arabino-heptonate = 3-dehydroquinate + phosphate. Its pathway is metabolic intermediate biosynthesis; chorismate biosynthesis; chorismate from D-erythrose 4-phosphate and phosphoenolpyruvate: step 2/7. In terms of biological role, catalyzes the conversion of 3-deoxy-D-arabino-heptulosonate 7-phosphate (DAHP) to dehydroquinate (DHQ). This is 3-dehydroquinate synthase from Synechocystis sp. (strain ATCC 27184 / PCC 6803 / Kazusa).